We begin with the raw amino-acid sequence, 119 residues long: Hemerythrin subunit B (119 aa).

7 residues coordinate Fe cation: H26, H55, E59, H74, H78, H107, and D112.

Belongs to the hemerythrin family.

Its function is as follows. Hemerythrin is a respiratory protein in blood cells of certain marine worms. The oxygen-binding site in each chain contains two iron atoms. The protein is Hemerythrin subunit B of Sipunculus nudus (Sipunculan worm).